The sequence spans 722 residues: Polyribonucleotide nucleotidyltransferase (722 aa).

2 residues coordinate Mg(2+): Asp-498 and Asp-504. Positions 565 to 624 (PQFHTMKIDPDKIRDIIGKGGATIRSITEETGASIDIDDNGTIKIYADDGDGMQAAIARI) constitute a KH domain. The S1 motif domain occupies 634 to 702 (GAVYQGKVVR…QRGRIKLSIK (69 aa)).

The protein belongs to the polyribonucleotide nucleotidyltransferase family. As to quaternary structure, component of the RNA degradosome, which is a multiprotein complex involved in RNA processing and mRNA degradation. It depends on Mg(2+) as a cofactor.

The protein localises to the cytoplasm. It catalyses the reaction RNA(n+1) + phosphate = RNA(n) + a ribonucleoside 5'-diphosphate. Functionally, involved in mRNA degradation. Catalyzes the phosphorolysis of single-stranded polyribonucleotides processively in the 3'- to 5'-direction. The chain is Polyribonucleotide nucleotidyltransferase from Saccharophagus degradans (strain 2-40 / ATCC 43961 / DSM 17024).